The following is a 367-amino-acid chain: Carbohydrate sulfotransferase 14 (367 aa).

The Cytoplasmic portion of the chain corresponds to 1–34 (MPPRKKEYGIKRASGSLVHFRAPVSATTIRRHSA). A helical; Signal-anchor for type II membrane protein membrane pass occupies residues 35–55 (VVPSVLTFAVIVASGGLLLMI). The Lumenal portion of the chain corresponds to 56–367 (EKGMLNSVQT…PNTTTEYCRH (312 aa)). N99 is a glycosylation site (N-linked (GlcNAc...) asparagine). Residues 144-150 (PKVACSN) and 202-210 (REPMARLLS) each bind 3'-phosphoadenylyl sulfate. A glycan (N-linked (GlcNAc...) asparagine) is linked at N359.

The protein belongs to the sulfotransferase 2 family.

It is found in the golgi apparatus membrane. Its function is as follows. Catalyzes the transfer of sulfate to position 4 of the N-acetylgalactosamine (GalNAc) residue of dermatan sulfate. The polypeptide is Carbohydrate sulfotransferase 14 (chst14) (Danio rerio (Zebrafish)).